The chain runs to 270 residues: NADPH-dependent 7-cyano-7-deazaguanine reductase (270 aa).

79 to 81 (IES) contributes to the substrate binding site. 81–82 (SK) contributes to the NADPH binding site. Residue Cys177 is the Thioimide intermediate of the active site. Asp184 (proton donor) is an active-site residue. 216-217 (HE) contacts substrate. 245–246 (RG) provides a ligand contact to NADPH.

It belongs to the GTP cyclohydrolase I family. QueF type 2 subfamily. As to quaternary structure, homodimer.

It localises to the cytoplasm. The catalysed reaction is 7-aminomethyl-7-carbaguanine + 2 NADP(+) = 7-cyano-7-deazaguanine + 2 NADPH + 3 H(+). It functions in the pathway tRNA modification; tRNA-queuosine biosynthesis. Functionally, catalyzes the NADPH-dependent reduction of 7-cyano-7-deazaguanine (preQ0) to 7-aminomethyl-7-deazaguanine (preQ1). This chain is NADPH-dependent 7-cyano-7-deazaguanine reductase, found in Acinetobacter baumannii (strain SDF).